The sequence spans 137 residues: Small ribosomal subunit protein uS19 (137 aa).

The protein belongs to the universal ribosomal protein uS19 family.

Functionally, protein S19 forms a complex with S13 that binds strongly to the 16S ribosomal RNA. The sequence is that of Small ribosomal subunit protein uS19 from Methanoculleus marisnigri (strain ATCC 35101 / DSM 1498 / JR1).